A 440-amino-acid polypeptide reads, in one-letter code: MPAALHRRSWVPAASEDHVLAIAADAAARDAAGVAAEVERLVADSHRIHDVDGLNLNPATNVMNPAAEALLSRGLGSRPSLGYPGDKYEMGLEAIERIEVVAAELAAEVFGARFAEVRVSSGALSNLYVFMATCQPGDTIIAPPPAIGGHVTHHAAGAAGLYGLKTVPAPVDADGYSVDVVALAKLAREVKPKLITIGGSLNLFPHPVPAIREVADSVGAKVLFDAAHLSGMVAGKAWPQPLEDGAHAITMSTYKSLGGPAGGLIVSNDAALMERIDAIAYPGLTANSDAGRTAALARGLLDWKVHGTAYAAAMRDTAQALARALDALGLPVFAKARGFTQSHQFALEAARWGGGQRAAKQLARGGLLACGIGLPIAPVDGDINGLRLGVPEIVRLGFTPEDMPQLAGWIARALAGDAPAVAAEVRERRTRLNGLRYIVR.

At Lys255 the chain carries N6-(pyridoxal phosphate)lysine.

This sequence belongs to the SHMT family. Alpha-methylserine aldolase subfamily. Homodimer. It depends on pyridoxal 5'-phosphate as a cofactor.

The catalysed reaction is 2-methyl-L-serine = formaldehyde + L-alanine. The enzyme catalyses 2-ethyl-L-serine = (2S)-2-aminobutanoate + formaldehyde. Its activity is regulated as follows. In the alpha-methyl-L-serine synthesis reaction, activity is inhibited by an excess amount of formaldehyde (at a concentration greater than 4 mM). Formaldehyde release activity is reduced by the sulfhydryl reagent N-ethylmaleimide, iodoacetate amide and iodoacetic acid, but not by dithiothreitol and 2-mercaptoethanol. Activity is enhanced by 1 mM of manganese chloride. Catalyzes the reversible interconversion of alpha-methyl-L-serine to L-alanine and formaldehyde. Can also catalyze the synthesis of alpha-ethyl-L-serine from L-2-aminobutyric acid and formaldehyde. Also shows low alanine racemase activity. Cannot use alpha-methyl-D-serine, L-serine, D-serine, (S)-2-amino-1-propanol, (R)-2-amino-1-propanol, (S)-alpha-hydroxymethyltyrosine, (R)-alpha-hydroxymethyltyrosine, alpha-iso-butyl-DL-serine, alpha-iso-propyl-DL-serine or alpha-benzyl-DL-serine. Cannot use D-alanine instead of L-alanine as the substrate for alpha-methyl-L-serine synthesis. Does not require tetrahydrofolate (THF) for activity. This Variovorax paradoxus protein is Alpha-methylserine aldolase.